Consider the following 439-residue polypeptide: Secreted aspartic protease FUS4 (439 aa).

Positions 1 to 22 (MLTIATLHVALQVFGAFSPSHA) are cleaved as a signal peptide. The Peptidase A1 domain maps to 49–434 (YLFNVTVGSP…NFEDRSFGLA (386 aa)). N-linked (GlcNAc...) asparagine glycans are attached at residues Asn52 and Asn61. Asp67 is a catalytic residue. Residues Asn101, Asn107, and Asn123 are each glycosylated (N-linked (GlcNAc...) asparagine). Asp296 is an active-site residue. An intrachain disulfide couples Cys352 to Cys390.

Belongs to the peptidase A1 family.

The protein resides in the secreted. In terms of biological role, secreted aspartic protease; part of the gene cluster that mediates the biosynthesis of the mycotoxin fusarin C. Within the cluster, FUS1, FUS2, FUS8 and FUS9 are sufficient for fusarin production. The other FUS cluster members are not essential for fusarin C biosynthesis. The chain is Secreted aspartic protease FUS4 from Gibberella moniliformis (strain M3125 / FGSC 7600) (Maize ear and stalk rot fungus).